Here is a 1165-residue protein sequence, read N- to C-terminus: Transient receptor potential cation channel subfamily M member 5 (1165 aa).

Topologically, residues 1-715 (MVEKSSERFD…LRRWNRFWSA (715 aa)) are cytoplasmic. Ser121 carries the phosphoserine modification. Ca(2+) contacts are provided by Glu212, Cys324, Asp333, Asp336, and Glu337. Residues 716–740 (PVTVFMGNVIMYFAFLILFSYVLLL) traverse the membrane as a helical segment. Residues 741-751 (DFRPPPPYGPS) lie on the Extracellular side of the membrane. Residues 752–771 (AAEIILYFWVFTLVLEEIRQ) traverse the membrane as a helical segment. Positions 768 and 771 each coordinate Ca(2+). At 772–792 (SFFTDEDMSILKKMKLYVEDN) the chain is on the cytoplasmic side. The helical transmembrane segment at 793–811 (WNKCDMVAISLFVVGLSCR) threads the bilayer. Ca(2+) is bound by residues Asn794 and Asp797. At 812–818 (MAMSTYE) the chain is on the extracellular side. The chain crosses the membrane as a helical span at residues 819-841 (AGRTVLALDFMVFTLRLIHIFAI). Over 842–850 (HKQLGPKII) the chain is Cytoplasmic. A helical membrane pass occupies residues 851–880 (IVERMIKDVFFFLFFLSVWLIAYGVTTQAL). Over 881–889 (LHPNDPRID) the chain is Extracellular. The segment at residues 890–930 (WVFRRALYRPYLHIFGQIPLEEIDAAKMPDDNCTTDVQEII) is an intramembrane region (pore-forming). The Selectivity filter motif lies at 904 to 906 (FGQ). At 931 to 942 (LGTLPPCPNIYA) the chain is on the extracellular side. A helical transmembrane segment spans residues 943–977 (NWLVILLLVIYLLVTNVLLLNLLIAMFSYTFQVVQ). Over 978–1165 (ENADIFWKFQ…TDKKLPFIDH (188 aa)) the chain is Cytoplasmic. Glu994 provides a ligand contact to Ca(2+). Positions 1122–1165 (RDAPKAPRSIAGSSRDQQPQGAKRQQPAGHPAYGTDKKLPFIDH) are disordered. A compositionally biased stretch (polar residues) spans 1132–1141 (AGSSRDQQPQ). Residues 1156–1165 (TDKKLPFIDH) are compositionally biased toward basic and acidic residues.

Belongs to the transient receptor (TC 1.A.4) family. LTrpC subfamily. TRPM5 sub-subfamily. In terms of assembly, homotetramer.

It is found in the cell membrane. The enzyme catalyses Na(+)(in) = Na(+)(out). The catalysed reaction is K(+)(in) = K(+)(out). With respect to regulation, ca(2+)-activated cation channel. Displays voltage dependence modulation. Regulated by PI(4,5)P2 levels. PI(4,5)P 2 reverses the Ca(2+) -induced desensitization of channels. Is highly temperature-sensitive. Its function is as follows. Monovalent cation-selective ion channel activated by intracellular Ca(2+) in a voltage- and temperature-dependent manner. Mediates the transport of Na(+), K(+) and Cs(+) ions equally well. Activated directly by increase in intracellular Ca(2+), but is impermeable to it. The activation mechanism of TRPM5 involves a multistep process. TRPM5 activation involves ligand binding (i.e., tastant molecule, glucose stimulation) to Gq/G-protein coupled receptors (GPCR) and leads to the breakdown of phosphatidylinositol bisphosphate (PIP2) into diacylglycerol (DAG) and inositol trisphosphate (IP3), IP3 binds to its receptors in the endoplasmic reticulum and cause Ca(2+) release. Simultaneously with the intracellular Ca(2+) release, DAG activates the protein kinase C (PKC), which phosphorylates the TRPM5 channel. This phosphorylation combined with the bound Ca(2+), leads to a robust inward current allowing the entry of sodium ions (Na+) into the cell. This ion influx depolarizes the cell membrane, generating action potentials that propagate TRPM5 signals. This Danio rerio (Zebrafish) protein is Transient receptor potential cation channel subfamily M member 5.